Here is a 506-residue protein sequence, read N- to C-terminus: Maturase K (506 aa).

The protein belongs to the intron maturase 2 family. MatK subfamily.

It is found in the plastid. The protein localises to the chloroplast. Its function is as follows. Usually encoded in the trnK tRNA gene intron. Probably assists in splicing its own and other chloroplast group II introns. In Andromeda polifolia (Bog rosemary), this protein is Maturase K.